The primary structure comprises 151 residues: Methylglyoxal synthase (151 aa).

The 146-residue stretch at 6–151 (RTMPAHKHVA…DYDAYLAERT (146 aa)) folds into the MGS-like domain. Residues His-19, Lys-23, 45–48 (TGTT), and 65–66 (SG) contribute to the substrate site. Asp-71 acts as the Proton donor/acceptor in catalysis. Residue His-98 coordinates substrate.

It belongs to the methylglyoxal synthase family.

It catalyses the reaction dihydroxyacetone phosphate = methylglyoxal + phosphate. Its function is as follows. Catalyzes the formation of methylglyoxal from dihydroxyacetone phosphate. The sequence is that of Methylglyoxal synthase from Vibrio campbellii (strain ATCC BAA-1116).